The sequence spans 235 residues: Glial cell line-derived neurotrophic factor (235 aa).

Residues 1–19 (MKLWDILATCLLLLSSVST) form the signal peptide. Positions 20–87 (RPLFHKLQPS…DFIEATLGRL (68 aa)) are excised as a propeptide. 2 disordered regions span residues 34–60 (VRSESPALDPIIDSQPETSNPKQASME) and 91–137 (SDVE…RVKG). Positions 119–128 (GERKRSRGRA) are enriched in basic residues. Cystine bridges form between cysteine 142/cysteine 203, cysteine 169/cysteine 232, and cysteine 173/cysteine 234. Asparagine 150 and asparagine 186 each carry an N-linked (GlcNAc...) asparagine glycan.

This sequence belongs to the TGF-beta family. GDNF subfamily. Homodimer; disulfide-linked. Interacts with GFRA1 coreceptor and RET: forms a 2:2:2 ternary complex composed of GDNF ligand, GFRA1 and RET receptor. First expressed at 14 hours post-fertilization (hpf) in the ventral half of anterior somites and in intermediate mesoderm. Ventral somitic expression persists and extends more posteriorly over the next 12 hours. Expressed throughout the ventral trunk mesoderm and endoderm at 24 hpf. By 30 hpf, somitic expression ceases and by 36 hpf, expression becomes restricted to the endodermal cells forming the gut, with expression along the whole length of the developing gut tube at 72 hpf.

The protein localises to the secreted. Its function is as follows. Neurotrophic factor that enhances survival and morphological differentiation of dopaminergic neurons and increases their high-affinity dopamine uptake. Acts by binding to its coreceptor, GFRA1, leading to autophosphorylation and activation of the RET receptor. The chain is Glial cell line-derived neurotrophic factor from Danio rerio (Zebrafish).